The following is a 54-amino-acid chain: Anti-adapter protein SpxO (54 aa).

As to quaternary structure, interacts with SpxH.

Functionally, inhibitor of Spx proteolytic control. Acts by interacting with SpxH/YjbH, which disrupts interaction between SpxH and Spx, and inhibits SpxH-enhanced proteolysis of Spx by ClpXP. Required for the stabilization of Spx and activation of Spx-regulated genes in response to cell wall stress. The protein is Anti-adapter protein SpxO of Bacillus subtilis (strain 168).